Here is a 295-residue protein sequence, read N- to C-terminus: G1/S-specific cyclin-D1 (295 aa).

Residues 28 to 152 (LRAMLKTEET…LLVNKLKWNL (125 aa)) form the Cyclin N-terminal domain. The tract at residues 262–283 (AQQNVDPKATEEEGEVEEEAGL) is disordered. A Glycyl lysine isopeptide (Lys-Gly) (interchain with G-Cter in ubiquitin) cross-link involves residue lysine 269. Phosphothreonine is present on threonine 286.

This sequence belongs to the cyclin family. Cyclin D subfamily. As to quaternary structure, interacts with either CDK4 or CDK6 protein kinase to form a serine/threonine kinase holoenzyme complex. The cyclin subunit imparts substrate specificity to the complex. Component of the ternary complex CCND1/CDK4/CDKN1B required for nuclear translocation and modulation of CDK4-mediated kinase activity. Interacts directly with CDKN1B. Can form similar complexes with either CDKN1A or CDKN2A. Interacts with UHRF2; the interaction ubiquitinates CCND1 and appears to occur independently of phosphorylation. Interacts with USP2. Interacts (via cyclin N-terminal domain) with INSM1 (via N-terminal region); the interaction competes with the binding of CCND1 to CDK4 during cell cycle progression and inhibits CDK4 activity. Interacts with CDK4; the interaction is prevented with the binding of CCND1 to INSM1 during cell cycle progression. Phosphorylation at Thr-286 by MAP kinases is required for ubiquitination and degradation by the DCX(AMBRA1) complex. It also plays an essential role for recognition by the FBXO31 component of SCF (SKP1-cullin-F-box) protein ligase complex following DNA damage. In terms of processing, ubiquitinated at Lys-269 by the DCX(AMBRA1) complex during the transition from G1 to S cell phase, leading to its degradation: ubiquitination is dependent on Thr-286 phosphorylation. The DCX(AMBRA1) complex represents the major regulator of CCND1 stability during the G1/S transition. Also ubiquitinated by the SCF(FBXO4) and Cul7-RING(FBXW8) ubiquitin-protein ligase complexes. Following DNA damage it is ubiquitinated by the SCF(FBXO31) protein ligase complex. SCF(FBXO31) ubiquitination is dependent on Thr-286 phosphorylation. Ubiquitinated also by UHRF2 apparently in a phosphorylation-independent manner. Ubiquitination leads to its degradation and G1 arrest. Deubiquitinated by USP2; leading to its stabilization. Expressed in the intestinal epithelium.

Its subcellular location is the nucleus. The protein localises to the cytoplasm. The protein resides in the nucleus membrane. Functionally, regulatory component of the cyclin D1-CDK4 (DC) complex that phosphorylates and inhibits members of the retinoblastoma (RB) protein family including RB1 and regulates the cell-cycle during G(1)/S transition. Phosphorylation of RB1 allows dissociation of the transcription factor E2F from the RB/E2F complex and the subsequent transcription of E2F target genes which are responsible for the progression through the G(1) phase. Hypophosphorylates RB1 in early G(1) phase. Cyclin D-CDK4 complexes are major integrators of various mitogenenic and antimitogenic signals. Also a substrate for SMAD3, phosphorylating SMAD3 in a cell-cycle-dependent manner and repressing its transcriptional activity. Component of the ternary complex, cyclin D1/CDK4/CDKN1B, required for nuclear translocation and activity of the cyclin D-CDK4 complex. Exhibits transcriptional corepressor activity with INSM1 on the NEUROD1 and INS promoters in a cell cycle-independent manner. This Mus musculus (Mouse) protein is G1/S-specific cyclin-D1 (Ccnd1).